Reading from the N-terminus, the 120-residue chain is Guanidine hydrolase-activating protein A (120 aa).

Residues His-2, Glu-3, and Glu-41 each contribute to the Ni(2+) site. Residues Cys-74, Cys-77, Cys-91, and Cys-94 each coordinate Zn(2+).

Belongs to the HypA/HybF family.

Functionally, involved in the maturation of the nickel-dependent guanidine hydrolase GdmH. Required for nickel insertion into the metal center of GdmH. Seems to be required only for GdmH activation and not for activity. In Synechocystis sp. (strain ATCC 27184 / PCC 6803 / Kazusa), this protein is Guanidine hydrolase-activating protein A.